A 639-amino-acid polypeptide reads, in one-letter code: MTTSTAAKRTKSGCWTCRLRRKKCNEGGPPCDNCEARGIHCHGYGPRPQWKDRGALEREEARKLQYQSGRGRSYSRSSSTAAAAAPKPAEGAMVTGGSSSSSRGSGSSIYVGGNGLGGAQEEQHGDNNAPFSAGTGNFEYQANPAPGISPLMSDIDLALDAHAMDPLDFNFDFSSTPSSAVDKSSSTSADSPSFTSIECSQFPIFSPELTVDTPVALFPQVAPIPPGLPGRESVPVAACTDLVISHGLLLEEMDRPVGQRHGQVMAEGEKGIELMMRCPPAPRAPRLEGQGRSAHILLFVRDWYAASSWRIWSGNIQDCQNHIDAAASLLLEHETALVGEAHRLSNMERKALAFFTVRLIWNDVLLSSTRRTVPKAEMVYRRLLLADSNSRGGDSHTTTSTTGPTTTTPLLAASTFWDLTGCEGAVLLAMLDASILSAWRLGEEASGSLSIRALVGRADKIEAVVEGEIARLSSLLPRSPEKTSSASGKPSHGRKTGPENEVTVATVHSLIFAHAILTDLHQTVSGPRASVPEIGDSISRAISSAWNLWQEQQQQGAGLGLERILAWPYCVAASLAKGDQREVFREIIARTENGDGSSSGGDVQQLKSIVEQCWATSSSNHRDWKDVVQRSNQFGVFLI.

The zn(2)-C6 fungal-type DNA-binding region spans 14–41 (CWTCRLRRKKCNEGGPPCDNCEARGIHC). Disordered stretches follow at residues 58–136 (REEA…AGTG) and 476–499 (LPRS…TGPE). The span at 68 to 108 (SGRGRSYSRSSSTAAAAAPKPAEGAMVTGGSSSSSRGSGSS) shows a compositional bias: low complexity.

The protein localises to the nucleus. Its function is as follows. Transcription factor; part of the gene cluster that mediates the biosynthesis of the phomopsins, a group of hexapeptide mycotoxins which infects lupins and causes lupinosis disease in livestock. May play a role in the regulation of the production of phomopsins. This Diaporthe leptostromiformis (Lupinosis disease fungus) protein is Transcription factor phomR.